A 72-amino-acid chain; its full sequence is MKPSEIREMSIEEIDAKIRELRLQLAKERGLLTMGTSLENPMVIRNLRRDIARLLTIKKEKLREREKGKVKK.

Belongs to the universal ribosomal protein uL29 family. Part of the 50S ribosomal subunit.

The chain is Large ribosomal subunit protein uL29 from Pyrococcus furiosus (strain ATCC 43587 / DSM 3638 / JCM 8422 / Vc1).